We begin with the raw amino-acid sequence, 458 residues long: Phosphoglucosamine mutase (458 aa).

The active-site Phosphoserine intermediate is the serine 108. Mg(2+) is bound by residues serine 108, aspartate 247, aspartate 249, and aspartate 251. At serine 108 the chain carries Phosphoserine.

This sequence belongs to the phosphohexose mutase family. Mg(2+) serves as cofactor. In terms of processing, activated by phosphorylation.

It carries out the reaction alpha-D-glucosamine 1-phosphate = D-glucosamine 6-phosphate. Catalyzes the conversion of glucosamine-6-phosphate to glucosamine-1-phosphate. The chain is Phosphoglucosamine mutase from Thiobacillus denitrificans (strain ATCC 25259 / T1).